The following is a 251-amino-acid chain: Triosephosphate isomerase (251 aa).

Residue 12–14 coordinates substrate; that stretch reads NWK. Catalysis depends on His-99, which acts as the Electrophile. The active-site Proton acceptor is the Glu-169. Substrate is bound by residues Gly-175, Ser-214, and 235-236; that span reads GG.

The protein belongs to the triosephosphate isomerase family. In terms of assembly, homodimer.

The protein resides in the cytoplasm. The enzyme catalyses D-glyceraldehyde 3-phosphate = dihydroxyacetone phosphate. Its pathway is carbohydrate biosynthesis; gluconeogenesis. It participates in carbohydrate degradation; glycolysis; D-glyceraldehyde 3-phosphate from glycerone phosphate: step 1/1. Involved in the gluconeogenesis. Catalyzes stereospecifically the conversion of dihydroxyacetone phosphate (DHAP) to D-glyceraldehyde-3-phosphate (G3P). This chain is Triosephosphate isomerase, found in Bradyrhizobium sp. (strain BTAi1 / ATCC BAA-1182).